Here is a 393-residue protein sequence, read N- to C-terminus: Elongation factor Tu (393 aa).

Positions 10–203 (KPHVNIGTIG…AVDNYIPEPV (194 aa)) constitute a tr-type G domain. Residues 19 to 26 (GHVDHGKT) are G1. GTP is bound at residue 19 to 26 (GHVDHGKT). Thr-26 contributes to the Mg(2+) binding site. The tract at residues 60–64 (GITIS) is G2. The segment at 81–84 (DCPG) is G3. GTP contacts are provided by residues 81–85 (DCPGH) and 136–139 (NKVD). Positions 136–139 (NKVD) are G4. The G5 stretch occupies residues 173–175 (SAL).

Belongs to the TRAFAC class translation factor GTPase superfamily. Classic translation factor GTPase family. EF-Tu/EF-1A subfamily. In terms of assembly, monomer.

The protein resides in the cytoplasm. The catalysed reaction is GTP + H2O = GDP + phosphate + H(+). GTP hydrolase that promotes the GTP-dependent binding of aminoacyl-tRNA to the A-site of ribosomes during protein biosynthesis. The chain is Elongation factor Tu from Chlorobium phaeovibrioides (strain DSM 265 / 1930) (Prosthecochloris vibrioformis (strain DSM 265)).